Consider the following 473-residue polypeptide: 3-isopropylmalate dehydratase large subunit (473 aa).

[4Fe-4S] cluster is bound by residues C348, C408, and C411.

It belongs to the aconitase/IPM isomerase family. LeuC type 1 subfamily. Heterodimer of LeuC and LeuD. It depends on [4Fe-4S] cluster as a cofactor.

It catalyses the reaction (2R,3S)-3-isopropylmalate = (2S)-2-isopropylmalate. It participates in amino-acid biosynthesis; L-leucine biosynthesis; L-leucine from 3-methyl-2-oxobutanoate: step 2/4. In terms of biological role, catalyzes the isomerization between 2-isopropylmalate and 3-isopropylmalate, via the formation of 2-isopropylmaleate. This chain is 3-isopropylmalate dehydratase large subunit, found in Haloarcula marismortui (strain ATCC 43049 / DSM 3752 / JCM 8966 / VKM B-1809) (Halobacterium marismortui).